A 102-amino-acid polypeptide reads, in one-letter code: MTPLQQLAATIEARKGADPASSWTAKLLSKGPEKCAEKFGEEAVEAIIEAVKGDRDALTSEAADALYHLLVMCAARDVSLSDIEAELESRHGTSGLTEKANR.

Belongs to the PRA-PH family.

The protein resides in the cytoplasm. The catalysed reaction is 1-(5-phospho-beta-D-ribosyl)-ATP + H2O = 1-(5-phospho-beta-D-ribosyl)-5'-AMP + diphosphate + H(+). The protein operates within amino-acid biosynthesis; L-histidine biosynthesis; L-histidine from 5-phospho-alpha-D-ribose 1-diphosphate: step 2/9. The polypeptide is Phosphoribosyl-ATP pyrophosphatase (Jannaschia sp. (strain CCS1)).